The chain runs to 82 residues: Exodeoxyribonuclease 7 small subunit (82 aa).

It belongs to the XseB family. In terms of assembly, heterooligomer composed of large and small subunits.

Its subcellular location is the cytoplasm. It carries out the reaction Exonucleolytic cleavage in either 5'- to 3'- or 3'- to 5'-direction to yield nucleoside 5'-phosphates.. Functionally, bidirectionally degrades single-stranded DNA into large acid-insoluble oligonucleotides, which are then degraded further into small acid-soluble oligonucleotides. In Sodalis glossinidius (strain morsitans), this protein is Exodeoxyribonuclease 7 small subunit.